The sequence spans 173 residues: Glucagon family neuropeptides (173 aa).

The first 22 residues, 1–22 (MSSKATLALLIYGIIMHYSVYS), serve as a signal peptide directing secretion. A propeptide spanning residues 23–80 (SPLGLNYPNLRLENEVYDEDGNSLPALAFDSDQIAIRSPPSVADDLYTLYYPPEKGTE) is cleaved from the precursor. Position 166 is a lysine amide (Lys-166). Positions 170–173 (LGYL) are excised as a propeptide.

It belongs to the glucagon family.

It localises to the secreted. Functionally, primary role of GHRH is to release GH from the pituitary. PACAP plays pivotal roles as a neurotransmitter and/or a neuromodulator. The sequence is that of Glucagon family neuropeptides from Oncorhynchus nerka (Sockeye salmon).